A 477-amino-acid polypeptide reads, in one-letter code: Ribulose bisphosphate carboxylase large chain (477 aa).

The propeptide occupies Met-1–Ser-2. At Pro-3 the chain carries N-acetylproline. N6,N6,N6-trimethyllysine is present on Lys-14. Asn-123 and Thr-173 together coordinate substrate. Lys-175 (proton acceptor) is an active-site residue. Position 177 (Lys-177) interacts with substrate. Residues Lys-201, Asp-203, and Glu-204 each contribute to the Mg(2+) site. An N6-carboxylysine modification is found at Lys-201. The Proton acceptor role is filled by His-294. Residues Arg-295, His-327, and Ser-379 each coordinate substrate.

The protein belongs to the RuBisCO large chain family. Type I subfamily. In terms of assembly, heterohexadecamer of 8 large chains and 8 small chains; disulfide-linked. The disulfide link is formed within the large subunit homodimers. Mg(2+) is required as a cofactor. In terms of processing, the disulfide bond which can form in the large chain dimeric partners within the hexadecamer appears to be associated with oxidative stress and protein turnover.

It localises to the plastid. It is found in the chloroplast. It catalyses the reaction 2 (2R)-3-phosphoglycerate + 2 H(+) = D-ribulose 1,5-bisphosphate + CO2 + H2O. The enzyme catalyses D-ribulose 1,5-bisphosphate + O2 = 2-phosphoglycolate + (2R)-3-phosphoglycerate + 2 H(+). In terms of biological role, ruBisCO catalyzes two reactions: the carboxylation of D-ribulose 1,5-bisphosphate, the primary event in carbon dioxide fixation, as well as the oxidative fragmentation of the pentose substrate in the photorespiration process. Both reactions occur simultaneously and in competition at the same active site. This Nicotiana tomentosiformis (Tobacco) protein is Ribulose bisphosphate carboxylase large chain.